A 469-amino-acid chain; its full sequence is Glutamate-1-semialdehyde 2,1-aminomutase, chloroplastic (469 aa).

The N-terminal 34 residues, 1-34 (MAGAAAAVASGISIRPVAAPKISRAPRSRSVVRA), are a transit peptide targeting the chloroplast. Lys309 carries the N6-(pyridoxal phosphate)lysine modification.

The protein belongs to the class-III pyridoxal-phosphate-dependent aminotransferase family. HemL subfamily. As to quaternary structure, homodimer. Requires pyridoxal 5'-phosphate as cofactor.

The protein localises to the plastid. The protein resides in the chloroplast. The enzyme catalyses (S)-4-amino-5-oxopentanoate = 5-aminolevulinate. Its pathway is porphyrin-containing compound metabolism; protoporphyrin-IX biosynthesis; 5-aminolevulinate from L-glutamyl-tRNA(Glu): step 2/2. It functions in the pathway porphyrin-containing compound metabolism; chlorophyll biosynthesis. The sequence is that of Glutamate-1-semialdehyde 2,1-aminomutase, chloroplastic (GSA) from Hordeum vulgare (Barley).